The chain runs to 451 residues: Tubulin gamma-1 chain (451 aa).

142-148 (AGGTGSG) is a binding site for GTP.

This sequence belongs to the tubulin family.

It localises to the cytoplasm. It is found in the cytoskeleton. The protein localises to the microtubule organizing center. Its subcellular location is the centrosome. The protein resides in the spindle. Tubulin is the major constituent of microtubules. The gamma chain is found at microtubule organizing centers (MTOC) such as the spindle poles or the centrosome, suggesting that it is involved in the minus-end nucleation of microtubule assembly. The sequence is that of Tubulin gamma-1 chain (tubg1) from Xenopus laevis (African clawed frog).